The following is a 312-amino-acid chain: Phosphoribosylglycinamide formyltransferase, chloroplastic (312 aa).

The transit peptide at 1-73 (MEAQQIISRF…EVCSSSWRIW (73 aa)) directs the protein to the chloroplast. 109 to 111 (GSN) serves as a coordination point for N(1)-(5-phospho-beta-D-ribosyl)glycinamide. (6R)-10-formyltetrahydrofolate contacts are provided by residues K162, 187–190 (LKLI), and N204. Catalysis depends on H206, which acts as the Proton donor. A (6R)-10-formyltetrahydrofolate-binding site is contributed by D247. Residue E276 participates in N(1)-(5-phospho-beta-D-ribosyl)glycinamide binding.

Belongs to the GART family.

It localises to the plastid. Its subcellular location is the chloroplast. It catalyses the reaction N(1)-(5-phospho-beta-D-ribosyl)glycinamide + (6R)-10-formyltetrahydrofolate = N(2)-formyl-N(1)-(5-phospho-beta-D-ribosyl)glycinamide + (6S)-5,6,7,8-tetrahydrofolate + H(+). It functions in the pathway purine metabolism; IMP biosynthesis via de novo pathway; N(2)-formyl-N(1)-(5-phospho-D-ribosyl)glycinamide from N(1)-(5-phospho-D-ribosyl)glycinamide (10-formyl THF route): step 1/1. The protein is Phosphoribosylglycinamide formyltransferase, chloroplastic (PUR3) of Vigna unguiculata (Cowpea).